Reading from the N-terminus, the 164-residue chain is Nucleotide-binding protein Helmi_22490 (164 aa).

Belongs to the YajQ family.

Functionally, nucleotide-binding protein. The chain is Nucleotide-binding protein Helmi_22490 from Heliobacterium modesticaldum (strain ATCC 51547 / Ice1).